Reading from the N-terminus, the 313-residue chain is Acetyl-coenzyme A carboxylase carboxyl transferase subunit alpha (313 aa).

The CoA carboxyltransferase C-terminal domain maps to 36–286 (RLDKEVKTIY…KEYFLDTLRT (251 aa)).

This sequence belongs to the AccA family. As to quaternary structure, acetyl-CoA carboxylase is a heterohexamer composed of biotin carboxyl carrier protein (AccB), biotin carboxylase (AccC) and two subunits each of ACCase subunit alpha (AccA) and ACCase subunit beta (AccD).

It localises to the cytoplasm. It carries out the reaction N(6)-carboxybiotinyl-L-lysyl-[protein] + acetyl-CoA = N(6)-biotinyl-L-lysyl-[protein] + malonyl-CoA. It functions in the pathway lipid metabolism; malonyl-CoA biosynthesis; malonyl-CoA from acetyl-CoA: step 1/1. Component of the acetyl coenzyme A carboxylase (ACC) complex. First, biotin carboxylase catalyzes the carboxylation of biotin on its carrier protein (BCCP) and then the CO(2) group is transferred by the carboxyltransferase to acetyl-CoA to form malonyl-CoA. This chain is Acetyl-coenzyme A carboxylase carboxyl transferase subunit alpha, found in Helicobacter acinonychis (strain Sheeba).